The sequence spans 729 residues: ATP-dependent DNA helicase Hel308 (729 aa).

ATP contacts are provided by residues Gln28 and 46-53 (IPTASGKT). Residues 33 to 199 (EKGLLEGRNL…WLEAELVVSE (167 aa)) enclose the Helicase ATP-binding domain. The DEAH box motif lies at 144 to 147 (DEVH). The 195-residue stretch at 232 to 426 (AVNLALDTLK…SKLGTENALR (195 aa)) folds into the Helicase C-terminal domain. The tract at residues 706–729 (SSGIIASEPPEKSPYSGQKTISDY) is disordered. The segment covering 720–729 (YSGQKTISDY) has biased composition (polar residues).

This sequence belongs to the helicase family. Hel308 subfamily. As to quaternary structure, monomer.

The catalysed reaction is Couples ATP hydrolysis with the unwinding of duplex DNA by translocating in the 3'-5' direction.. It carries out the reaction ATP + H2O = ADP + phosphate + H(+). In terms of biological role, DNA-dependent ATPase and 3'-5' DNA helicase that may be involved in repair of stalled replication forks. This is ATP-dependent DNA helicase Hel308 from Methanosarcina barkeri (strain Fusaro / DSM 804).